Consider the following 243-residue polypeptide: MRKLVLLRHGQSEWNKENRFTGWTDVDLSVDGVSEAAQAGRILKKNNYTFDAAYTSVLKRAIRTLQIVLYEMDLLWIPVYKSWKLNERHYGALQGLNKDETRDKYGEDQVHLWRRSVEVRPPALEKSDKRYPGNEKKYASLKEEELPVTENLEDTEKRVLQDWRELIAPNIKGGKNIIISAHGNTLRALVKYLDNIPSDGIANLNIPTGTPLVYELDENLEPITRYYLGMDGKIEDDKFPKKV.

Substrate-binding positions include 8–15 (RHGQSEWN), 21–22 (TG), Arg-60, 87–90 (ERHY), Lys-98, 114–115 (RR), and 183–184 (GN). Residue His-9 is the Tele-phosphohistidine intermediate of the active site. Glu-87 acts as the Proton donor/acceptor in catalysis.

Belongs to the phosphoglycerate mutase family. BPG-dependent PGAM subfamily.

The enzyme catalyses (2R)-2-phosphoglycerate = (2R)-3-phosphoglycerate. It functions in the pathway carbohydrate degradation; glycolysis; pyruvate from D-glyceraldehyde 3-phosphate: step 3/5. In terms of biological role, catalyzes the interconversion of 2-phosphoglycerate and 3-phosphoglycerate. This chain is 2,3-bisphosphoglycerate-dependent phosphoglycerate mutase, found in Clostridium acetobutylicum (strain ATCC 824 / DSM 792 / JCM 1419 / IAM 19013 / LMG 5710 / NBRC 13948 / NRRL B-527 / VKM B-1787 / 2291 / W).